We begin with the raw amino-acid sequence, 91 residues long: Small ribosomal subunit protein uS15 (91 aa).

The protein belongs to the universal ribosomal protein uS15 family. Part of the 30S ribosomal subunit. Forms a bridge to the 50S subunit in the 70S ribosome, contacting the 23S rRNA.

One of the primary rRNA binding proteins, it binds directly to 16S rRNA where it helps nucleate assembly of the platform of the 30S subunit by binding and bridging several RNA helices of the 16S rRNA. In terms of biological role, forms an intersubunit bridge (bridge B4) with the 23S rRNA of the 50S subunit in the ribosome. The polypeptide is Small ribosomal subunit protein uS15 (Synechococcus sp. (strain JA-3-3Ab) (Cyanobacteria bacterium Yellowstone A-Prime)).